A 288-amino-acid polypeptide reads, in one-letter code: ATP synthase gamma chain (288 aa).

This sequence belongs to the ATPase gamma chain family. In terms of assembly, F-type ATPases have 2 components, CF(1) - the catalytic core - and CF(0) - the membrane proton channel. CF(1) has five subunits: alpha(3), beta(3), gamma(1), delta(1), epsilon(1). CF(0) has three main subunits: a, b and c.

The protein resides in the cell inner membrane. In terms of biological role, produces ATP from ADP in the presence of a proton gradient across the membrane. The gamma chain is believed to be important in regulating ATPase activity and the flow of protons through the CF(0) complex. In Haemophilus ducreyi (strain 35000HP / ATCC 700724), this protein is ATP synthase gamma chain.